Here is a 59-residue protein sequence, read N- to C-terminus: MTFITLTIGLSLRTIFLIFIFLPPPHLLARTTSLTRRQTRKTTIKVFVFILPFYQTPNW.

The first 29 residues, 1 to 29 (MTFITLTIGLSLRTIFLIFIFLPPPHLLA), serve as a signal peptide directing secretion.

It belongs to the non-disulfide-bridged peptide (NDBP) superfamily. Expressed by the venom gland.

It localises to the secreted. This Lychas mucronatus (Chinese swimming scorpion) protein is Venom protein 27.7.